A 153-amino-acid chain; its full sequence is UPF0756 membrane protein BCQ_4399 (153 aa).

4 helical membrane-spanning segments follow: residues 8–28 (FLFILLIIGLIAKNQSLTVAI), 54–74 (LGVTVITIAVLVPIATGEIGF), 87–107 (WIALASGVAVALLAKGGVQLL), and 117–137 (LVFGTIIAVALFNGVAVGPLI).

Belongs to the UPF0756 family.

The protein localises to the cell membrane. In Bacillus cereus (strain Q1), this protein is UPF0756 membrane protein BCQ_4399.